The following is a 539-amino-acid chain: GMP synthase [glutamine-hydrolyzing] (539 aa).

A Glutamine amidotransferase type-1 domain is found at 4 to 202 (KILILDFGSQ…VLQIAGCKPD (199 aa)). C81 functions as the Nucleophile in the catalytic mechanism. Active-site residues include H176 and E178. Residues 203–395 (WVMRDHIEEA…LGLPPEMVYR (193 aa)) enclose the GMPS ATP-PPase domain. 230–236 (SGGVDSS) lines the ATP pocket.

Homodimer.

The catalysed reaction is XMP + L-glutamine + ATP + H2O = GMP + L-glutamate + AMP + diphosphate + 2 H(+). It functions in the pathway purine metabolism; GMP biosynthesis; GMP from XMP (L-Gln route): step 1/1. Its function is as follows. Catalyzes the synthesis of GMP from XMP. The protein is GMP synthase [glutamine-hydrolyzing] of Cupriavidus taiwanensis (strain DSM 17343 / BCRC 17206 / CCUG 44338 / CIP 107171 / LMG 19424 / R1) (Ralstonia taiwanensis (strain LMG 19424)).